The sequence spans 313 residues: MNATYRHITVLLEEAVSALAPREDGCYLDGTFGRGGHSRALLEKLGTGGRLLGFDKDPQAIQTGKALAAEDGRFVIVQRSFAELGDEVRARGLEGRVDGVLLDLGVSSPQLDDPERGFSFLNDGPLDMRMNPGQGISAAEFIANATEEEIARVFKVYGEERFAKRMARAIVQRRQERPFERTADLAEVITVANPAWEKGKNPATRAFQGLRIHVNNELGDLERGLDAALESLAVGGRLVVISFHSLEDRIVKLFMRKHAKGEADNLPRDLPIRSKVFEPRLKLLGKPQYASEEELKANPRSRSAVMRVAEKLR.

S-adenosyl-L-methionine is bound by residues 35 to 37, aspartate 55, phenylalanine 81, aspartate 103, and glutamine 110; that span reads GGH.

This sequence belongs to the methyltransferase superfamily. RsmH family.

Its subcellular location is the cytoplasm. The catalysed reaction is cytidine(1402) in 16S rRNA + S-adenosyl-L-methionine = N(4)-methylcytidine(1402) in 16S rRNA + S-adenosyl-L-homocysteine + H(+). Specifically methylates the N4 position of cytidine in position 1402 (C1402) of 16S rRNA. This Pseudomonas aeruginosa (strain UCBPP-PA14) protein is Ribosomal RNA small subunit methyltransferase H.